The chain runs to 479 residues: Nuclear envelope integral membrane protein 2 (479 aa).

The N-terminal stretch at 1–23 is a signal peptide; the sequence is MEKLAAFILVLTLLCAYWQSAEG. Asparagine 69 is a glycosylation site (N-linked (GlcNAc...) asparagine). Helical transmembrane passes span 172-192, 203-223, 233-253, 276-296, and 301-321; these read LFFY…FLTL, LFLV…QRVL, HWME…AVCY, IVLL…VAVL, and ILPL…SFLA. N-linked (GlcNAc...) asparagine glycosylation occurs at asparagine 414. Residues 414-479 form a disordered region; sequence NSSSSDTQSH…PLDPEDQDFF (66 aa). Low complexity predominate over residues 438 to 449; sequence NSPPVLNNLPSP. A compositionally biased stretch (pro residues) spans 450 to 470; that stretch reads TIYPPTICPYPPVTYTPQPEP.

It belongs to the NEMP family.

It is found in the nucleus inner membrane. Functionally, contributes to nuclear envelope stiffness in germ cells. Involved in male and female fertility. This is Nuclear envelope integral membrane protein 2 from Danio rerio (Zebrafish).